We begin with the raw amino-acid sequence, 473 residues long: G2/mitotic-specific cyclin-1 (473 aa).

Residues 1-12 show a composition bias toward polar residues; it reads MGSRNIVQQQNR. Disordered regions lie at residues 1–23 and 134–155; these read MGSR…AMKQ and KEKP…APTL. The segment covering 134–147 has biased composition (basic and acidic residues); it reads KEKPIEKEKAAEKS.

Belongs to the cyclin family. Cyclin AB subfamily. In terms of assembly, interacts with the CDC2 and CDK2 protein kinases to form a serine/threonine kinase holoenzyme complex. The cyclin subunit imparts substrate specificity to the complex.

Essential for the control of the cell cycle at the G2/M (mitosis) transition. G2/M cyclins accumulate steadily during G2 and are abruptly destroyed at mitosis. This is G2/mitotic-specific cyclin-1 from Antirrhinum majus (Garden snapdragon).